We begin with the raw amino-acid sequence, 1466 residues long: DNA-directed RNA polymerase subunit beta'' (1466 aa).

Zn(2+) contacts are provided by C220, C296, C303, and C306. Residues 618-725 are disordered; sequence TREEDLEDEY…EDEYDSSEED (108 aa). Composition is skewed to acidic residues over residues 621–631, 639–651, and 707–725; these read EDLEDEYETLE, DEYE…DEYG, and LEED…SEED.

The protein belongs to the RNA polymerase beta' chain family. RpoC2 subfamily. As to quaternary structure, in plastids the minimal PEP RNA polymerase catalytic core is composed of four subunits: alpha, beta, beta', and beta''. When a (nuclear-encoded) sigma factor is associated with the core the holoenzyme is formed, which can initiate transcription. It depends on Zn(2+) as a cofactor.

The protein resides in the plastid. Its subcellular location is the chloroplast. It carries out the reaction RNA(n) + a ribonucleoside 5'-triphosphate = RNA(n+1) + diphosphate. In terms of biological role, DNA-dependent RNA polymerase catalyzes the transcription of DNA into RNA using the four ribonucleoside triphosphates as substrates. The chain is DNA-directed RNA polymerase subunit beta'' from Agrostis stolonifera (Creeping bentgrass).